The primary structure comprises 179 residues: Cell division protein SepF (179 aa).

A disordered region spans residues 19–55; sequence DSSLPYEKRDEPVFTSVNSSQEPALPMNQPSQSAGAK. A compositionally biased stretch (polar residues) spans 33-55; that stretch reads TSVNSSQEPALPMNQPSQSAGAK.

It belongs to the SepF family. In terms of assembly, homodimer. Interacts with FtsZ.

The protein resides in the cytoplasm. Functionally, cell division protein that is part of the divisome complex and is recruited early to the Z-ring. Probably stimulates Z-ring formation, perhaps through the cross-linking of FtsZ protofilaments. Its function overlaps with FtsA. This chain is Cell division protein SepF, found in Streptococcus pneumoniae (strain JJA).